The following is a 468-amino-acid chain: ATP synthase subunit beta (468 aa).

ATP is bound at residue 155-162 (GGAGVGKT).

It belongs to the ATPase alpha/beta chains family. As to quaternary structure, F-type ATPases have 2 components, CF(1) - the catalytic core - and CF(0) - the membrane proton channel. CF(1) has five subunits: alpha(3), beta(3), gamma(1), delta(1), epsilon(1). CF(0) has three main subunits: a(1), b(2) and c(9-12). The alpha and beta chains form an alternating ring which encloses part of the gamma chain. CF(1) is attached to CF(0) by a central stalk formed by the gamma and epsilon chains, while a peripheral stalk is formed by the delta and b chains.

Its subcellular location is the cell membrane. It catalyses the reaction ATP + H2O + 4 H(+)(in) = ADP + phosphate + 5 H(+)(out). Produces ATP from ADP in the presence of a proton gradient across the membrane. The catalytic sites are hosted primarily by the beta subunits. The chain is ATP synthase subunit beta from Bacillus cereus (strain B4264).